A 521-amino-acid chain; its full sequence is Maturase K (521 aa).

It belongs to the intron maturase 2 family. MatK subfamily.

The protein resides in the plastid. In terms of biological role, usually encoded in the trnK tRNA gene intron. Probably assists in splicing its own and other chloroplast group II introns. The polypeptide is Maturase K (Cuscuta exaltata (Tall dodder)).